The sequence spans 400 residues: S-adenosylmethionine sensor upstream of mTORC1 (400 aa).

The S-adenosyl-L-methionine site is built by Arg-99, Gly-168, Asp-186, Asp-198, Phe-199, and Ser-240.

Belongs to the BMT2/SAMTOR family. As to quaternary structure, interacts with the GATOR1 complex; interaction is disrupted when samtor binds S-adenosyl-L-methionine. Interacts with the KICSTOR complex; interaction is disrupted when samtor binds S-adenosyl-L-methionine.

Functionally, S-adenosyl-L-methionine-binding protein that acts as an inhibitor of mTORC1 signaling via interaction with the GATOR1 and KICSTOR complexes. Acts as a sensor of S-adenosyl-L-methionine to signal methionine sufficiency to mTORC1: in presence of methionine, binds S-adenosyl-L-methionine, leading to disrupt interaction with the GATOR1 and KICSTOR complexes and promote mTORC1 signaling. Upon methionine starvation, S-adenosyl-L-methionine levels are reduced, thereby promoting the association with GATOR1 and KICSTOR, leading to inhibit mTORC1 signaling. Probably also acts as a S-adenosyl-L-methionine-dependent methyltransferase. The protein is S-adenosylmethionine sensor upstream of mTORC1 of Xenopus laevis (African clawed frog).